The primary structure comprises 174 residues: Heat shock protein 22 (174 aa).

In terms of domain architecture, sHSP spans Gln-44–Glu-154. Thr-152 is subject to Phosphothreonine. The disordered stretch occupies residues Thr-152–Gln-174. The segment covering Pro-159–Gln-174 has biased composition (basic and acidic residues).

This sequence belongs to the small heat shock protein (HSP20) family.

The sequence is that of Heat shock protein 22 (Hsp22) from Drosophila melanogaster (Fruit fly).